A 305-amino-acid chain; its full sequence is Glycine--tRNA ligase alpha subunit (305 aa).

The protein belongs to the class-II aminoacyl-tRNA synthetase family. In terms of assembly, tetramer of two alpha and two beta subunits.

Its subcellular location is the cytoplasm. It catalyses the reaction tRNA(Gly) + glycine + ATP = glycyl-tRNA(Gly) + AMP + diphosphate. The chain is Glycine--tRNA ligase alpha subunit from Streptococcus gordonii (strain Challis / ATCC 35105 / BCRC 15272 / CH1 / DL1 / V288).